The following is a 276-amino-acid chain: Type III pantothenate kinase (276 aa).

18-25 contacts ATP; sequence EIGNSRLH. Substrate-binding positions include Y116 and 120–123; that span reads GIDR. Residue D122 is the Proton acceptor of the active site. D142 contributes to the K(+) binding site. T145 provides a ligand contact to ATP. Position 200 (T200) interacts with substrate.

The protein belongs to the type III pantothenate kinase family. As to quaternary structure, homodimer. NH4(+) is required as a cofactor. It depends on K(+) as a cofactor.

Its subcellular location is the cytoplasm. It carries out the reaction (R)-pantothenate + ATP = (R)-4'-phosphopantothenate + ADP + H(+). The protein operates within cofactor biosynthesis; coenzyme A biosynthesis; CoA from (R)-pantothenate: step 1/5. Catalyzes the phosphorylation of pantothenate (Pan), the first step in CoA biosynthesis. This Nostoc sp. (strain PCC 7120 / SAG 25.82 / UTEX 2576) protein is Type III pantothenate kinase.